The primary structure comprises 1201 residues: DNA-directed RNA polymerase subunit beta' (1201 aa).

4 residues coordinate Zn(2+): Cys60, Cys62, Cys75, and Cys78. Mg(2+) is bound by residues Asp449, Asp451, and Asp453. 4 residues coordinate Zn(2+): Cys818, Cys892, Cys899, and Cys902.

It belongs to the RNA polymerase beta' chain family. In terms of assembly, the RNAP catalytic core consists of 2 alpha, 1 beta, 1 beta' and 1 omega subunit. When a sigma factor is associated with the core the holoenzyme is formed, which can initiate transcription. Requires Mg(2+) as cofactor. Zn(2+) serves as cofactor.

The catalysed reaction is RNA(n) + a ribonucleoside 5'-triphosphate = RNA(n+1) + diphosphate. Its function is as follows. DNA-dependent RNA polymerase catalyzes the transcription of DNA into RNA using the four ribonucleoside triphosphates as substrates. The polypeptide is DNA-directed RNA polymerase subunit beta' (Listeria innocua serovar 6a (strain ATCC BAA-680 / CLIP 11262)).